We begin with the raw amino-acid sequence, 451 residues long: Phosphoglucosamine mutase (451 aa).

Ser-101 serves as the catalytic Phosphoserine intermediate. Residues Ser-101, Asp-240, Asp-242, and Asp-244 each contribute to the Mg(2+) site. Ser-101 bears the Phosphoserine mark.

It belongs to the phosphohexose mutase family. Mg(2+) is required as a cofactor. Activated by phosphorylation.

It catalyses the reaction alpha-D-glucosamine 1-phosphate = D-glucosamine 6-phosphate. In terms of biological role, catalyzes the conversion of glucosamine-6-phosphate to glucosamine-1-phosphate. This Streptococcus pyogenes serotype M3 (strain SSI-1) protein is Phosphoglucosamine mutase.